A 221-amino-acid polypeptide reads, in one-letter code: Oxaloacetate tautomerase FAHD1, mitochondrial (221 aa).

A mitochondrion-targeting transit peptide spans 1–24; it reads MASTKPLSRFWEWGKNIVCVGRNY. Residue arginine 22 coordinates oxalate. At serine 37 the chain carries Phosphoserine. Positions 68, 70, and 99 each coordinate Mg(2+). Lysine 110 carries the N6-acetyllysine modification. Lysine 112 carries the N6-succinyllysine modification. Position 120 (lysine 120) interacts with oxalate.

The protein belongs to the FAH family. Homodimer. Mg(2+) serves as cofactor. The cofactor is Mn(2+). Ubiquitous with higher expression in the liver and the kidney (at protein level).

It is found in the mitochondrion. The protein localises to the cytoplasm. The protein resides in the cytosol. It catalyses the reaction oxaloacetate = enol-oxaloacetate. The enzyme catalyses oxaloacetate + H(+) = pyruvate + CO2. It carries out the reaction a 3-acylpyruvate + H2O = a carboxylate + pyruvate + H(+). The catalysed reaction is acetylpyruvate + H2O = acetate + pyruvate + H(+). It catalyses the reaction 3-fumarylpyruvate + H2O = fumarate + pyruvate + H(+). With respect to regulation, oxaloacetate decarboxylation is potently and competitively inhibited by oxalate. In terms of biological role, tautomerase that converts enol-oxaloacetate, a strong inhibitor of succinate dehydrogenase, to the physiological keto form of oxaloacetate. It is thereby required to maximize aerobic respiration efficiency by preventing succinate dehydrogenase inhibition. Also acts as a weak oxaloacetate decarboxylase (ODx), catalyzing the decarboxylation of oxaloacetate (OAA) to pyruvate and CO(2), and as such is likely a regulatory enzyme in the TCA cycle. Also displays acylpyruvase activity, being able to hydrolyze acetylpyruvate and fumarylpyruvate in vitro. The protein is Oxaloacetate tautomerase FAHD1, mitochondrial of Mus musculus (Mouse).